The chain runs to 218 residues: Guanylate kinase (218 aa).

Residues 17–196 enclose the Guanylate kinase-like domain; it reads GVLLALSSPS…ALEKLNEILH (180 aa). Residue 24–31 coordinates ATP; the sequence is SPSGAGKT.

The protein belongs to the guanylate kinase family.

Its subcellular location is the cytoplasm. It carries out the reaction GMP + ATP = GDP + ADP. In terms of biological role, essential for recycling GMP and indirectly, cGMP. The chain is Guanylate kinase from Maricaulis maris (strain MCS10) (Caulobacter maris).